Reading from the N-terminus, the 363-residue chain is Ribonuclease D (363 aa).

The region spanning 5–168 is the 3'-5' exonuclease domain; that stretch reads ITHPSELTDR…AIHDELTRRL (164 aa). Residues 208–288 form the HRDC domain; sequence EPAAQRRLLR…NTPLPDEEHA (81 aa).

The protein belongs to the RNase D family. The cofactor is a divalent metal cation.

The protein resides in the cytoplasm. It catalyses the reaction Exonucleolytic cleavage that removes extra residues from the 3'-terminus of tRNA to produce 5'-mononucleotides.. Exonuclease involved in the 3' processing of various precursor tRNAs. Initiates hydrolysis at the 3'-terminus of an RNA molecule and releases 5'-mononucleotides. The polypeptide is Ribonuclease D (Xanthomonas oryzae pv. oryzae (strain KACC10331 / KXO85)).